Reading from the N-terminus, the 493-residue chain is Glutamate--tRNA ligase (493 aa).

Residues P10–T20 carry the 'HIGH' region motif. The short motif at K251 to R255 is the 'KMSKS' region element. An ATP-binding site is contributed by K254.

It belongs to the class-I aminoacyl-tRNA synthetase family. Glutamate--tRNA ligase type 1 subfamily. Monomer.

The protein localises to the cytoplasm. It catalyses the reaction tRNA(Glu) + L-glutamate + ATP = L-glutamyl-tRNA(Glu) + AMP + diphosphate. Catalyzes the attachment of glutamate to tRNA(Glu) in a two-step reaction: glutamate is first activated by ATP to form Glu-AMP and then transferred to the acceptor end of tRNA(Glu). The protein is Glutamate--tRNA ligase of Marinomonas sp. (strain MWYL1).